Consider the following 1413-residue polypeptide: DNA-directed RNA polymerase subunit beta' (1413 aa).

Zn(2+)-binding residues include cysteine 70, cysteine 72, cysteine 85, and cysteine 88. Aspartate 460, aspartate 462, and aspartate 464 together coordinate Mg(2+). Cysteine 814, cysteine 888, cysteine 895, and cysteine 898 together coordinate Zn(2+).

The protein belongs to the RNA polymerase beta' chain family. In terms of assembly, the RNAP catalytic core consists of 2 alpha, 1 beta, 1 beta' and 1 omega subunit. When a sigma factor is associated with the core the holoenzyme is formed, which can initiate transcription. The cofactor is Mg(2+). Zn(2+) serves as cofactor.

The catalysed reaction is RNA(n) + a ribonucleoside 5'-triphosphate = RNA(n+1) + diphosphate. Functionally, DNA-dependent RNA polymerase catalyzes the transcription of DNA into RNA using the four ribonucleoside triphosphates as substrates. The sequence is that of DNA-directed RNA polymerase subunit beta' from Buchnera aphidicola subsp. Schizaphis graminum (strain Sg).